The primary structure comprises 89 residues: Small ribosomal subunit protein uS15 (89 aa).

It belongs to the universal ribosomal protein uS15 family. In terms of assembly, part of the 30S ribosomal subunit. Forms a bridge to the 50S subunit in the 70S ribosome, contacting the 23S rRNA.

One of the primary rRNA binding proteins, it binds directly to 16S rRNA where it helps nucleate assembly of the platform of the 30S subunit by binding and bridging several RNA helices of the 16S rRNA. Its function is as follows. Forms an intersubunit bridge (bridge B4) with the 23S rRNA of the 50S subunit in the ribosome. This is Small ribosomal subunit protein uS15 from Bartonella quintana (strain Toulouse) (Rochalimaea quintana).